The sequence spans 186 residues: Elongation factor P (186 aa).

This sequence belongs to the elongation factor P family.

The protein localises to the cytoplasm. The protein operates within protein biosynthesis; polypeptide chain elongation. Involved in peptide bond synthesis. Stimulates efficient translation and peptide-bond synthesis on native or reconstituted 70S ribosomes in vitro. Probably functions indirectly by altering the affinity of the ribosome for aminoacyl-tRNA, thus increasing their reactivity as acceptors for peptidyl transferase. The sequence is that of Elongation factor P from Shewanella denitrificans (strain OS217 / ATCC BAA-1090 / DSM 15013).